The chain runs to 189 residues: Peptidyl-tRNA hydrolase (189 aa).

Tyr-15 provides a ligand contact to tRNA. The Proton acceptor role is filled by His-20. 3 residues coordinate tRNA: Tyr-65, Asn-67, and Asn-113.

Belongs to the PTH family. As to quaternary structure, monomer.

It is found in the cytoplasm. The catalysed reaction is an N-acyl-L-alpha-aminoacyl-tRNA + H2O = an N-acyl-L-amino acid + a tRNA + H(+). Functionally, hydrolyzes ribosome-free peptidyl-tRNAs (with 1 or more amino acids incorporated), which drop off the ribosome during protein synthesis, or as a result of ribosome stalling. Its function is as follows. Catalyzes the release of premature peptidyl moieties from peptidyl-tRNA molecules trapped in stalled 50S ribosomal subunits, and thus maintains levels of free tRNAs and 50S ribosomes. The protein is Peptidyl-tRNA hydrolase of Caldicellulosiruptor bescii (strain ATCC BAA-1888 / DSM 6725 / KCTC 15123 / Z-1320) (Anaerocellum thermophilum).